A 314-amino-acid polypeptide reads, in one-letter code: Ecto-ADP-ribosyltransferase 4 (314 aa).

Residues Met-1 to Gly-46 form the signal peptide. 2 disulfides stabilise this stretch: Cys-69-Cys-280 and Cys-182-Cys-231. In terms of domain architecture, TR mART core spans Lys-91 to Ser-276. N-linked (GlcNAc...) asparagine glycosylation is present at Asn-114. Tyr-126 lines the NAD(+) pocket. Asn-178 carries an N-linked (GlcNAc...) asparagine glycan. Residue Gln-206 coordinates NAD(+). Asn-222 is a glycosylation site (N-linked (GlcNAc...) asparagine). Ser-240 contacts NAD(+). 2 N-linked (GlcNAc...) asparagine glycosylation sites follow: Asn-257 and Asn-274. Ala-285 is lipidated: GPI-anchor amidated alanine. The propeptide at Ser-286–Val-314 is removed in mature form.

Belongs to the Arg-specific ADP-ribosyltransferase family.

It localises to the cell membrane. It carries out the reaction L-arginyl-[protein] + NAD(+) = N(omega)-(ADP-D-ribosyl)-L-arginyl-[protein] + nicotinamide + H(+). This chain is Ecto-ADP-ribosyltransferase 4 (ART4), found in Pan troglodytes (Chimpanzee).